An 83-amino-acid polypeptide reads, in one-letter code: Small ribosomal subunit protein eS21 (83 aa).

This sequence belongs to the eukaryotic ribosomal protein eS21 family. In terms of assembly, component of the 40S small ribosomal subunit.

Its subcellular location is the cytoplasm. The protein localises to the cytosol. It is found in the rough endoplasmic reticulum. This chain is Small ribosomal subunit protein eS21 (RpS21), found in Ixodes scapularis (Black-legged tick).